Consider the following 1583-residue polypeptide: Mediator of RNA polymerase II transcription subunit 12 (1583 aa).

2 disordered regions span residues 1 to 117 (MIPH…SLSW) and 1481 to 1525 (SNIP…SGIP). Residues 66-79 (DTSEREPPSKRLRL) show a composition bias toward basic and acidic residues. 2 stretches are compositionally biased toward low complexity: residues 102–114 (TPST…KPSS) and 1490–1514 (PSPA…GSST).

It belongs to the Mediator complex subunit 12 family. In terms of assembly, component of the srb8-11 complex, which itself associates with the Mediator complex.

Its subcellular location is the nucleus. Its function is as follows. Component of the srb8-11 complex. The srb8-11 complex is a regulatory module of the Mediator complex which is itself involved in regulation of basal and activated RNA polymerase II-dependent transcription. The srb8-11 complex may be involved in the transcriptional repression of a subset of genes regulated by Mediator. It may inhibit the association of the Mediator complex with RNA polymerase II to form the holoenzyme complex. The chain is Mediator of RNA polymerase II transcription subunit 12 (srb8) from Aspergillus terreus (strain NIH 2624 / FGSC A1156).